Consider the following 511-residue polypeptide: Cytochrome P450 77A2 (511 aa).

Cysteine 456 is a heme binding site.

This sequence belongs to the cytochrome P450 family. Heme is required as a cofactor.

This Solanum melongena (Eggplant) protein is Cytochrome P450 77A2 (CYP77A2).